The following is a 676-amino-acid chain: UvrABC system protein C (676 aa).

The region spanning 16 to 95 (VEPGVYRFRD…IKEFDPRFNI (80 aa)) is the GIY-YIG domain. One can recognise a UVR domain in the interval 208–243 (DRLVRDLERKMTAAAEDLDFERAARLRDDIGALRRA).

The protein belongs to the UvrC family. In terms of assembly, interacts with UvrB in an incision complex.

Its subcellular location is the cytoplasm. In terms of biological role, the UvrABC repair system catalyzes the recognition and processing of DNA lesions. UvrC both incises the 5' and 3' sides of the lesion. The N-terminal half is responsible for the 3' incision and the C-terminal half is responsible for the 5' incision. This chain is UvrABC system protein C, found in Mycobacterium sp. (strain JLS).